A 95-amino-acid chain; its full sequence is Large ribosomal subunit protein uL23 (95 aa).

Belongs to the universal ribosomal protein uL23 family. Part of the 50S ribosomal subunit. Contacts protein L29, and trigger factor when it is bound to the ribosome.

Its function is as follows. One of the early assembly proteins it binds 23S rRNA. One of the proteins that surrounds the polypeptide exit tunnel on the outside of the ribosome. Forms the main docking site for trigger factor binding to the ribosome. The sequence is that of Large ribosomal subunit protein uL23 from Pelotomaculum thermopropionicum (strain DSM 13744 / JCM 10971 / SI).